Reading from the N-terminus, the 659-residue chain is Alpha-amylase (659 aa).

A signal peptide spans 1–27 (MFAKRFKTSLLPLFAGFLLLFHLVLAG). The propeptide occupies 28–41 (PAAASAETANKSNE). Positions 142, 178, 187, 210, and 212 each coordinate Ca(2+). Asp217 serves as the catalytic Nucleophile. His221 is a Ca(2+) binding site. Glu249 serves as the catalytic Proton donor.

It belongs to the glycosyl hydrolase 13 family. As to quaternary structure, monomer. Ca(2+) serves as cofactor.

The protein localises to the secreted. The catalysed reaction is Endohydrolysis of (1-&gt;4)-alpha-D-glucosidic linkages in polysaccharides containing three or more (1-&gt;4)-alpha-linked D-glucose units.. The sequence is that of Alpha-amylase (amyE) from Bacillus subtilis (strain 168).